We begin with the raw amino-acid sequence, 65 residues long: Large ribosomal subunit protein bL35 (65 aa).

The disordered stretch occupies residues 1–23; the sequence is MPKIKTNRGAAKRFKKTGTGKVK. Positions 10–23 are enriched in basic residues; the sequence is AAKRFKKTGTGKVK.

This sequence belongs to the bacterial ribosomal protein bL35 family.

The sequence is that of Large ribosomal subunit protein bL35 from Trichlorobacter lovleyi (strain ATCC BAA-1151 / DSM 17278 / SZ) (Geobacter lovleyi).